Here is a 102-residue protein sequence, read N- to C-terminus: Transcription factor UPBEAT1 (102 aa).

Positions 32 to 82 (IRPRKSVEASRRPCRAIHRRVKTLKELVPNTKTSEGLDGLFRQTADYILAL) constitute a bHLH domain.

In terms of assembly, homodimer. In terms of tissue distribution, expressed in the root vascular tissue and in root hairs and lateral root caps. Detected at the protein level in all cell files in the elongation zone.

Its subcellular location is the nucleus. In terms of biological role, transcription factor that modulates the balance between cellular proliferation and differentiation in root growth. Does not act through cytokinin and auxin signaling, but by repressing peroxidase expression in the elongation zone. The protein is Transcription factor UPBEAT1 (UPB1) of Arabidopsis thaliana (Mouse-ear cress).